Consider the following 753-residue polypeptide: Translation initiation factor IF-2 (753 aa).

The segment at 1–166 (MSEKPRRDTG…PVMRPRGPVA (166 aa)) is disordered. Composition is skewed to low complexity over residues 19–43 (STGQSTNRTSNQQTGTGRTPTATGA), 71–81 (NARPAAPANAR), and 102–122 (TPAPVRGGGATPAPARGTNTR). The span at 133-146 (PQPEEREREREAVL) shows a compositional bias: basic and acidic residues. The segment covering 153–162 (TTTRPVMRPR) has biased composition (low complexity). Residues 249–418 (PRPPVVTIMG…LLVADLEDLR (170 aa)) enclose the tr-type G domain. A G1 region spans residues 258–265 (GHVDHGKT). 258–265 (GHVDHGKT) contributes to the GTP binding site. The G2 stretch occupies residues 283-287 (GITQH). The interval 304 to 307 (DTPG) is G3. Residues 304 to 308 (DTPGH) and 358 to 361 (NKID) each bind GTP. Residues 358–361 (NKID) form a G4 region. The tract at residues 394–396 (SAR) is G5.

It belongs to the TRAFAC class translation factor GTPase superfamily. Classic translation factor GTPase family. IF-2 subfamily.

It localises to the cytoplasm. Functionally, one of the essential components for the initiation of protein synthesis. Protects formylmethionyl-tRNA from spontaneous hydrolysis and promotes its binding to the 30S ribosomal subunits. Also involved in the hydrolysis of GTP during the formation of the 70S ribosomal complex. The chain is Translation initiation factor IF-2 from Chloroflexus aggregans (strain MD-66 / DSM 9485).